A 568-amino-acid polypeptide reads, in one-letter code: WW domain-containing protein A (568 aa).

Positions 6–129 (PLNNSNGSNS…TGPISHDVVF (124 aa)) constitute a C2 domain. The WW 1 domain maps to 325–359 (VKLPDGWESRIDPVSGKVFYLNHNNKTTSWISPLE). The disordered stretch occupies residues 376–461 (TILDNNNNNN…SRPKKTPATP (86 aa)). Residues 380–418 (NNNNNNNNNNNNNNNNNNNNNNINNTNNIQQKQQAQQQP) show a composition bias toward low complexity. Residues 435 to 451 (QKEKEKEKEINAEDYKI) are compositionally biased toward basic and acidic residues. Residues 519–552 (QGLPNGWEVRQDQFGRVFYVDHINRATTWTRPTV) form the WW 2 domain.

Interacts with calmodulin in the absence of Ca(2+).

It is found in the nucleus. The protein localises to the nucleolus. Its subcellular location is the cytoplasm. It localises to the cell cortex. The protein resides in the cytoskeleton. In terms of biological role, involved in regulation of actin cytoskeleton organization and cytokinesis. The sequence is that of WW domain-containing protein A from Dictyostelium discoideum (Social amoeba).